The chain runs to 63 residues: Small ribosomal subunit protein eS30B (63 aa).

A disordered region spans residues 1–35 (MAKVHGSLARAGKVKSQTPKVEKTEKPKKPKGRAY). The residue at position 16 (S16) is a Phosphoserine. T48 is modified (phosphothreonine).

The protein belongs to the eukaryotic ribosomal protein eS30 family. In terms of assembly, component of the small ribosomal subunit (SSU). Mature yeast ribosomes consist of a small (40S) and a large (60S) subunit. The 40S small subunit contains 1 molecule of ribosomal RNA (18S rRNA) and 33 different proteins (encoded by 57 genes). The large 60S subunit contains 3 rRNA molecules (25S, 5.8S and 5S rRNA) and 46 different proteins (encoded by 81 genes).

The protein localises to the cytoplasm. Functionally, component of the ribosome, a large ribonucleoprotein complex responsible for the synthesis of proteins in the cell. The small ribosomal subunit (SSU) binds messenger RNAs (mRNAs) and translates the encoded message by selecting cognate aminoacyl-transfer RNA (tRNA) molecules. The large subunit (LSU) contains the ribosomal catalytic site termed the peptidyl transferase center (PTC), which catalyzes the formation of peptide bonds, thereby polymerizing the amino acids delivered by tRNAs into a polypeptide chain. The nascent polypeptides leave the ribosome through a tunnel in the LSU and interact with protein factors that function in enzymatic processing, targeting, and the membrane insertion of nascent chains at the exit of the ribosomal tunnel. The protein is Small ribosomal subunit protein eS30B of Saccharomyces cerevisiae (strain ATCC 204508 / S288c) (Baker's yeast).